Consider the following 804-residue polypeptide: Leucine--tRNA ligase (804 aa).

Positions 39–50 (PYPSGKGLHVGH) match the 'HIGH' region motif. Positions 573 to 577 (KMSKS) match the 'KMSKS' region motif. K576 is a binding site for ATP.

This sequence belongs to the class-I aminoacyl-tRNA synthetase family.

The protein resides in the cytoplasm. The enzyme catalyses tRNA(Leu) + L-leucine + ATP = L-leucyl-tRNA(Leu) + AMP + diphosphate. This Lactobacillus delbrueckii subsp. bulgaricus (strain ATCC BAA-365 / Lb-18) protein is Leucine--tRNA ligase.